The following is a 76-amino-acid chain: Exodeoxyribonuclease 7 small subunit (76 aa).

Belongs to the XseB family. As to quaternary structure, heterooligomer composed of large and small subunits.

Its subcellular location is the cytoplasm. It catalyses the reaction Exonucleolytic cleavage in either 5'- to 3'- or 3'- to 5'-direction to yield nucleoside 5'-phosphates.. Functionally, bidirectionally degrades single-stranded DNA into large acid-insoluble oligonucleotides, which are then degraded further into small acid-soluble oligonucleotides. In Geotalea daltonii (strain DSM 22248 / JCM 15807 / FRC-32) (Geobacter daltonii), this protein is Exodeoxyribonuclease 7 small subunit.